Consider the following 626-residue polypeptide: Serine/threonine-protein kinase PknH (626 aa).

Over 1 to 403 (MSDAQDSRVG…QTPRKTNPWP (403 aa)) the chain is Cytoplasmic. Residues 16–276 (YHLKRLLGRG…DLALAAHEAL (261 aa)) form the Protein kinase domain. ATP-binding positions include 22–30 (LGRGGMGEV) and lysine 45. The active-site Proton acceptor is aspartate 139. Threonine 170 carries the phosphothreonine modification. The disordered stretch occupies residues 292-396 (QESTLPAPPK…GGPSPWAQTP (105 aa)). 2 stretches are compositionally biased toward pro residues: residues 297 to 308 (PAPPKPVPPPTM) and 316 to 342 (RQPPAPPVTPPGVQPAPKPSYTPPAQP). The span at 343 to 355 (GPAGQRPGPTGQP) shows a compositional bias: low complexity. The chain crosses the membrane as a helical span at residues 404–424 (LVAGAAAVVLVLVLGAIGIWI). At 425-626 (AIRPKPVQPP…AKIVDKVNKE (202 aa)) the chain is on the extracellular side. 2 cysteine pairs are disulfide-bonded: cysteine 482–cysteine 545 and cysteine 587–cysteine 604.

This sequence belongs to the protein kinase superfamily. Ser/Thr protein kinase family. A divalent metal cation serves as cofactor. Autophosphorylated on threonine and serine residues. Dephosphorylated by PstP.

It is found in the cell membrane. The enzyme catalyses L-seryl-[protein] + ATP = O-phospho-L-seryl-[protein] + ADP + H(+). It catalyses the reaction L-threonyl-[protein] + ATP = O-phospho-L-threonyl-[protein] + ADP + H(+). Functionally, may regulate bacterial growth in response to external signals to facilitate adaptation to the host environment. The protein is Serine/threonine-protein kinase PknH (pknH) of Mycobacterium tuberculosis (strain CDC 1551 / Oshkosh).